A 164-amino-acid chain; its full sequence is Ubiquitin-fold modifier-conjugating enzyme 1 (164 aa).

The active-site Glycyl thioester intermediate is the C116.

Belongs to the ubiquitin-conjugating enzyme family. UFC1 subfamily.

In terms of biological role, E2-like enzyme which forms an intermediate with UFM1 via a thioester linkage. The protein is Ubiquitin-fold modifier-conjugating enzyme 1 of Drosophila sechellia (Fruit fly).